The following is a 504-amino-acid chain: Maturase K (504 aa).

It belongs to the intron maturase 2 family. MatK subfamily.

Its subcellular location is the plastid. The protein localises to the chloroplast. In terms of biological role, usually encoded in the trnK tRNA gene intron. Probably assists in splicing its own and other chloroplast group II introns. The sequence is that of Maturase K from Barbarea vulgaris (Yellow rocket).